The following is a 289-amino-acid chain: Ribosomal RNA small subunit methyltransferase H (289 aa).

Residues 40–42 (GGH), aspartate 60, phenylalanine 84, aspartate 106, and glutamine 113 each bind S-adenosyl-L-methionine.

Belongs to the methyltransferase superfamily. RsmH family.

The protein localises to the cytoplasm. It carries out the reaction cytidine(1402) in 16S rRNA + S-adenosyl-L-methionine = N(4)-methylcytidine(1402) in 16S rRNA + S-adenosyl-L-homocysteine + H(+). Its function is as follows. Specifically methylates the N4 position of cytidine in position 1402 (C1402) of 16S rRNA. This Haemophilus influenzae (strain PittGG) protein is Ribosomal RNA small subunit methyltransferase H.